The chain runs to 215 residues: Ran-specific GTPase-activating protein 1 (215 aa).

2 stretches are compositionally biased toward basic and acidic residues: residues 1–18 and 26–35; these read MSAEQEKKTQGTTKEEQK and VASKQTEEAK. Residues 1 to 78 are disordered; sequence MSAEQEKKTQ…ASPEVHFEPI (78 aa). The residue at position 70 (serine 70) is a Phosphoserine. Residues 74 to 210 enclose the RanBD1 domain; the sequence is HFEPIVKLSA…FEKYQEENAK (137 aa).

This sequence belongs to the RANBP1 family.

It is found in the cytoplasm. In terms of biological role, stimulates the GTPase activity in the presence of RNA1. May potentiate the action of RanGAP1 (RNA1), thus playing the role of a negative regulator. This Schizosaccharomyces pombe (strain 972 / ATCC 24843) (Fission yeast) protein is Ran-specific GTPase-activating protein 1 (sbp1).